We begin with the raw amino-acid sequence, 465 residues long: Pancreatic triacylglycerol lipase (465 aa).

The N-terminal stretch at 1–16 (MLPLWTLSLLLGAVAG) is a signal peptide. Cystine bridges form between Cys20–Cys26 and Cys107–Cys118. Ser169 acts as the Nucleophile in catalysis. Asn183 carries N-linked (GlcNAc...) asparagine glycosylation. Asp193 serves as the catalytic Charge relay system. The Ca(2+) site is built by Glu204, Arg207, Asp209, and Asp212. A disulfide bridge connects residues Cys254 and Cys278. His280 serves as the catalytic Charge relay system. Cystine bridges form between Cys302/Cys313, Cys316/Cys321, and Cys449/Cys465. The PLAT domain maps to 355-465 (WRYKVSVTLS…EEVLLTLTPC (111 aa)).

Belongs to the AB hydrolase superfamily. Lipase family. In terms of assembly, forms a 1:1 stoichiometric complex with (pro)colipase/CLPS.

The protein resides in the secreted. The catalysed reaction is a triacylglycerol + H2O = a diacylglycerol + a fatty acid + H(+). It catalyses the reaction 1,2,3-tributanoylglycerol + H2O = dibutanoylglycerol + butanoate + H(+). The enzyme catalyses 1,2,3-tri-(9Z-octadecenoyl)-glycerol + H2O = di-(9Z)-octadecenoylglycerol + (9Z)-octadecenoate + H(+). It carries out the reaction all-trans-retinyl hexadecanoate + H2O = all-trans-retinol + hexadecanoate + H(+). The catalysed reaction is 1,2-di-(9Z-octadecenoyl)-glycerol + H2O = (9Z-octadecenoyl)-glycerol + (9Z)-octadecenoate + H(+). With respect to regulation, inhibited by bile salts, is reactivated by (pro)colipase/CLPS. Functionally, plays an important role in fat metabolism. It preferentially splits the esters of long-chain fatty acids at positions 1 and 3, producing mainly 2-monoacylglycerol and free fatty acids, and shows considerably higher activity against insoluble emulsified substrates than against soluble ones. In Homo sapiens (Human), this protein is Pancreatic triacylglycerol lipase.